A 601-amino-acid chain; its full sequence is Replication protein A 70 kDa DNA-binding subunit (601 aa).

The disordered stretch occupies residues 107–172; sequence MPGKIGDPTP…NTPGGSSKVV (66 aa). The segment covering 124-135 has biased composition (low complexity); sequence APSTAPAPTARP. Positions 137–153 are enriched in polar residues; sequence QPQNGSDGSTYRPSAQS. A DNA-binding region (OB) is located at residues 184 to 268; sequence WTIRARVTNK…LKNDYEMTLN (85 aa). Ser370 is subject to Phosphoserine. The C4-type zinc-finger motif lies at 466–488; the sequence is CPSKDCNKKVVDQQNGMFRCEKC.

Belongs to the replication factor A protein 1 family. In terms of assembly, component of the heterotrimeric canonical replication protein A complex (RPA).

Its subcellular location is the nucleus. The protein resides in the PML body. Its function is as follows. As part of the heterotrimeric replication protein A complex (RPA/RP-A), binds and stabilizes single-stranded DNA intermediates, that form during DNA replication or upon DNA stress. It prevents their reannealing and in parallel, recruits and activates different proteins and complexes involved in DNA metabolism. Thereby, it plays an essential role both in DNA replication and the cellular response to DNA damage. This is Replication protein A 70 kDa DNA-binding subunit (rpa1) from Danio rerio (Zebrafish).